A 145-amino-acid chain; its full sequence is Large ribosomal subunit protein uL13 (145 aa).

This sequence belongs to the universal ribosomal protein uL13 family. As to quaternary structure, part of the 50S ribosomal subunit.

Functionally, this protein is one of the early assembly proteins of the 50S ribosomal subunit, although it is not seen to bind rRNA by itself. It is important during the early stages of 50S assembly. In Staphylococcus saprophyticus subsp. saprophyticus (strain ATCC 15305 / DSM 20229 / NCIMB 8711 / NCTC 7292 / S-41), this protein is Large ribosomal subunit protein uL13.